Consider the following 153-residue polypeptide: Replicase large subunit (153 aa).

Belongs to the tobamovirus RNA-directed RNA polymerase family.

It catalyses the reaction RNA(n) + a ribonucleoside 5'-triphosphate = RNA(n+1) + diphosphate. The replicase large subunit is an RNA-dependent RNA polymerase active in viral RNA replication. The protein is Replicase large subunit of Citrullus (Cucumber).